Consider the following 224-residue polypeptide: dTDP-fucosamine acetyltransferase (224 aa).

An N-acetyltransferase domain is found at 94–224 (PALRQLASAA…VESTAYWLYR (131 aa)). Acetyl-CoA-binding positions include 168–174 (LAGRGAG), Asn-201, and Arg-207. Tyr-208 acts as the Proton donor in catalysis.

This sequence belongs to the WecD family. Homodimer.

The catalysed reaction is dTDP-4-amino-4,6-dideoxy-alpha-D-galactose + acetyl-CoA = dTDP-4-acetamido-4,6-dideoxy-alpha-D-galactose + CoA + H(+). It functions in the pathway bacterial outer membrane biogenesis; enterobacterial common antigen biosynthesis. Functionally, catalyzes the acetylation of dTDP-fucosamine (dTDP-4-amino-4,6-dideoxy-D-galactose) to dTDP-Fuc4NAc, which is utilized in the biosynthesis of the enterobacterial common antigen (ECA). This Escherichia coli O6:H1 (strain CFT073 / ATCC 700928 / UPEC) protein is dTDP-fucosamine acetyltransferase.